The following is a 1391-amino-acid chain: Axoneme-associated protein mst101(2) (1391 aa).

Disordered stretches follow at residues 170 to 213 (ECNQ…GKKL) and 280 to 300 (SSEP…EKEL). Positions 184 to 201 (TKKGKTKGKSGGGNKKRS) are enriched in basic residues. The segment covering 291–300 (KNDEKKEKEL) has biased composition (basic and acidic residues). 59 consecutive repeat copies span residues 332 to 347 (KKKC…EEAE), 348 to 363 (KKKC…EEDE), 364 to 379 (KKAC…EADE), 380 to 395 (KKKC…KAAE), 396 to 411 (KKKC…EAAE), 412 to 427 (KKKC…EAAE), 428 to 443 (RKKC…KAAE), 444 to 459 (KKKC…EAAE), 460 to 475 (RKKC…KAAE), 476 to 491 (KKKC…EVAE), 492 to 507 (RKKC…KAEI), 508 to 523 (KKKC…ETAE), 524 to 539 (KKKC…EAAE), 540 to 555 (KKKC…EAAE), 556 to 571 (KKKC…EAAE), 572 to 587 (KKKC…EAAE), 588 to 603 (KKKC…EVAE), 604 to 619 (RKKC…KAAE), 620 to 635 (KKKC…EAAE), 636 to 651 (REKC…KAAE), 652 to 667 (KKKC…ETAE), 668 to 683 (KKKC…EAAE), 684 to 699 (KKKC…EAAE), 700 to 715 (KKKC…EAAE), 716 to 731 (RKKC…KAAE), 732 to 747 (KKKC…AGEK), 748 to 763 (NKLK…ALKE), 764 to 779 (KKKC…AEKK), 780 to 795 (KCKE…AEKK), 796 to 811 (KCEK…AEKK), 812 to 827 (KCEK…AEKK), 828 to 843 (KCEK…AEKK), 844 to 859 (KCEK…AEKK), 860 to 875 (KCEK…AEKK), 876 to 891 (KCEK…AEKK), 892 to 907 (KCAE…AEKK), 908 to 923 (KCEE…AERK), 924 to 939 (KCEE…AEKK), 940 to 955 (KCKK…GEKN), 956 to 971 (KLKK…CKKL), 972 to 987 (GKKS…CAEA), 988 to 1003 (AKKE…CEER), 1004 to 1019 (AKKQ…CEER), 1020 to 1035 (AKKL…CEER), 1036 to 1051 (AKKL…CEER), 1052 to 1067 (AKKL…CEER), 1068 to 1083 (AKKL…CEER), 1084 to 1099 (AKKE…CEER), 1100 to 1115 (AKKL…CEER), 1116 to 1131 (AKKE…CEEA), 1132 to 1147 (AKRE…CAEA), 1148 to 1163 (AKKE…CAEA), 1164 to 1179 (AKKE…CAEA), 1180 to 1195 (AKRE…CADL), 1196 to 1211 (AKKE…CEEA), 1212 to 1227 (AKKE…CAKA), 1228 to 1243 (AKKE…CAEA), 1244 to 1259 (AKKE…CAEA), and 1260 to 1275 (AKKE…CEKA). Residues 332–1275 (KKKCKDLGRK…AEKKRKCEKA (944 aa)) form a 59 X 16 AA approximate tandem repeats of [KR]-K-X-C-X-X-X-A-K-X-X-K-X-X-X-E region. Positions 370–429 (LAKKKKEADEKKKCEEAANKEKKAAEKKKCEKAAKERKEAAEKKKCEEAAKKEKEAAERK) are disordered. Residues 516-577 (KKEKETAEKK…EAAEKKKCEK (62 aa)) are disordered. Residues 517-577 (KEKETAEKKK…EAAEKKKCEK (61 aa)) are compositionally biased toward basic and acidic residues. The segment covering 729 to 765 (AAEKKKCKKLAKKKKAGEKNKLKKGNKKGKKALKEKK) has biased composition (basic residues). Disordered stretches follow at residues 729 to 881 (AAEK…EKAA), 900 to 922 (EKEL…VAER), and 934 to 1013 (KAAE…AAEK). Positions 766 to 881 (KCRELAKKKA…AEKKKCEKAA (116 aa)) are enriched in basic and acidic residues. Basic residues-rich tracts occupy residues 934-949 (KAAE…KKEK) and 956-976 (KLKK…KKSK). The span at 977 to 1013 (RAAEKKKCAEAAKKEKEAATKKKCEERAKKQKEAAEK) shows a compositional bias: basic and acidic residues. 2 disordered regions span residues 1076 to 1095 (EKKQ…EKKQ) and 1104 to 1212 (KEAA…EEAA). Over residues 1353 to 1370 (KKEKEAAEKKKRCKDLAK) the composition is skewed to basic and acidic residues. The tract at residues 1353-1391 (KKEKEAAEKKKRCKDLAKNKKKGHKKKGRNENRKKRTDC) is disordered. Residues 1371 to 1391 (NKKKGHKKKGRNENRKKRTDC) show a composition bias toward basic residues.

Testis. Primary spermatocytes and early spermatids.

The protein resides in the cytoplasm. In terms of biological role, possible structural role in the sperm tail. The chain is Axoneme-associated protein mst101(2) (mst101(2)) from Drosophila hydei (Fruit fly).